Reading from the N-terminus, the 437-residue chain is Nuclear hormone receptor family member nhr-28 (437 aa).

Residues Lys5–Arg80 constitute a DNA-binding region (nuclear receptor). 2 consecutive NR C4-type zinc fingers follow at residues Cys8–Cys28 and Cys44–Cys68. Residues Tyr115–Arg376 enclose the NR LBD domain.

This sequence belongs to the nuclear hormone receptor family. In terms of tissue distribution, expressed in the pharynx, intestine and hypodermis.

The protein localises to the nucleus. Functionally, orphan nuclear receptor. This chain is Nuclear hormone receptor family member nhr-28 (nhr-28), found in Caenorhabditis elegans.